Reading from the N-terminus, the 62-residue chain is Cecropin-D (62 aa).

The N-terminal stretch at M1–A22 is a signal peptide. Positions A23–P24 are cleaved as a propeptide — removed by a dipeptidylpeptidase. At K60 the chain carries Lysine amide.

Belongs to the cecropin family.

It localises to the secreted. In terms of biological role, cecropins have lytic and antibacterial activity against several Gram-positive and Gram-negative bacteria. The chain is Cecropin-D from Hyalophora cecropia (Cecropia moth).